Consider the following 234-residue polypeptide: Membrane glycoprotein RL11 (234 aa).

A signal peptide spans 1-23; that stretch reads MQTYSTPLTLIIVTSLFLFTTQG. Residues 183 to 203 traverse the membrane as a helical segment; it reads LHCAWVSGLMIFVGALVICFL.

It localises to the host membrane. The polypeptide is Membrane glycoprotein RL11 (RL11) (Human cytomegalovirus (strain Merlin) (HHV-5)).